We begin with the raw amino-acid sequence, 1132 residues long: Sentrin-specific protease 6 (1132 aa).

2 disordered regions span residues 23–51 (SKRD…DGAN) and 327–388 (LPGG…VPST). Phosphoserine is present on residues S41, S355, S356, S371, and S373. T436 is subject to Phosphothreonine. K648 participates in a covalent cross-link: Glycyl lysine isopeptide (Lys-Gly) (interchain with G-Cter in SUMO2). Positions 686–1132 (ISVTNEDLHC…QYASASGGSE (447 aa)) are protease. Residues H785 and D936 contribute to the active site. Position 938 is a phosphoserine (S938). Residue C1049 is part of the active site. A Phosphoserine modification is found at S1131.

It belongs to the peptidase C48 family. Interacts with RXRA. Forms a complex with KAT5-TIP60 and UBE2I in response to UV irradiation. Interacts with RPA1 to maintain it in hyposumoylated state during S phase preventing DNA repair initiation.

It is found in the nucleus. Its pathway is protein modification; protein sumoylation. Functionally, protease that deconjugates SUMO1, SUMO2 and SUMO3 from targeted proteins. Processes preferentially poly-SUMO2 and poly-SUMO3 chains, but does not efficiently process SUMO1, SUMO2 and SUMO3 precursors. Deconjugates SUMO1 from RXRA, leading to transcriptional activation. Involved in chromosome alignment and spindle assembly, by regulating the kinetochore CENPH-CENPI-CENPK complex. Desumoylates PML and CENPI, protecting them from degradation by the ubiquitin ligase RNF4, which targets polysumoylated proteins for proteasomal degradation. Also desumoylates RPA1, thus preventing recruitment of RAD51 to the DNA damage foci to initiate DNA repair through homologous recombination. The sequence is that of Sentrin-specific protease 6 (Senp6) from Mus musculus (Mouse).